The primary structure comprises 195 residues: N-terminal acetyltransferase B complex catalytic subunit NAT3 (195 aa).

The 171-residue stretch at threonine 2–alanine 172 folds into the N-acetyltransferase domain.

It belongs to the acetyltransferase family. GNAT subfamily. Component of the N-terminal acetyltransferase B (NatB) complex, which is composed of NAT3 and MDM20.

Its subcellular location is the cytoplasm. The catalysed reaction is N-terminal L-methionyl-L-asparaginyl-[protein] + acetyl-CoA = N-terminal N(alpha)-acetyl-L-methionyl-L-asparaginyl-[protein] + CoA + H(+). It catalyses the reaction N-terminal L-methionyl-L-glutaminyl-[protein] + acetyl-CoA = N-terminal N(alpha)-acetyl-L-methionyl-L-glutaminyl-[protein] + CoA + H(+). It carries out the reaction N-terminal L-methionyl-L-aspartyl-[protein] + acetyl-CoA = N-terminal N(alpha)-acetyl-L-methionyl-L-aspartyl-[protein] + CoA + H(+). The enzyme catalyses N-terminal L-methionyl-L-glutamyl-[protein] + acetyl-CoA = N-terminal N(alpha)-acetyl-L-methionyl-L-glutamyl-[protein] + CoA + H(+). In terms of biological role, catalytic subunit of the NatB N-terminal acetyltransferase, which catalyzes acetylation of the amino-terminal methionine residues of all proteins beginning with Met-Asp or Met-Glu and of some proteins beginning with Met-Asn, Met-Gln or Met-Met. NatB acetylates TPM1 protein and regulates tropomyocin-actin interactions, it is presumed to N-acetylate 15% of all yeast proteins. The protein is N-terminal acetyltransferase B complex catalytic subunit NAT3 of Saccharomyces cerevisiae (strain ATCC 204508 / S288c) (Baker's yeast).